The sequence spans 508 residues: Photosystem II CP47 reaction center protein (508 aa).

6 consecutive transmembrane segments (helical) span residues 21–36 (SVHI…WAGS), 101–115 (IVFS…IWHW), 140–156 (GIHL…FGAF), 203–218 (IAAG…FHLS), 237–252 (VLSS…AFVV), and 457–472 (SFAL…HGAR).

It belongs to the PsbB/PsbC family. PsbB subfamily. PSII is composed of 1 copy each of membrane proteins PsbA, PsbB, PsbC, PsbD, PsbE, PsbF, PsbH, PsbI, PsbJ, PsbK, PsbL, PsbM, PsbT, PsbX, PsbY, PsbZ, Psb30/Ycf12, at least 3 peripheral proteins of the oxygen-evolving complex and a large number of cofactors. It forms dimeric complexes. It depends on Binds multiple chlorophylls. PSII binds additional chlorophylls, carotenoids and specific lipids. as a cofactor.

The protein localises to the plastid. Its subcellular location is the chloroplast thylakoid membrane. One of the components of the core complex of photosystem II (PSII). It binds chlorophyll and helps catalyze the primary light-induced photochemical processes of PSII. PSII is a light-driven water:plastoquinone oxidoreductase, using light energy to abstract electrons from H(2)O, generating O(2) and a proton gradient subsequently used for ATP formation. The sequence is that of Photosystem II CP47 reaction center protein from Nuphar advena (Common spatterdock).